The primary structure comprises 431 residues: Serine--tRNA ligase (431 aa).

Residue 238 to 240 (TAE) coordinates L-serine. 269–271 (RSE) is an ATP binding site. Position 292 (glutamate 292) interacts with L-serine. Position 356–359 (356–359 (EISS)) interacts with ATP. Residue serine 391 coordinates L-serine.

It belongs to the class-II aminoacyl-tRNA synthetase family. Type-1 seryl-tRNA synthetase subfamily. In terms of assembly, homodimer. The tRNA molecule binds across the dimer.

It is found in the cytoplasm. The catalysed reaction is tRNA(Ser) + L-serine + ATP = L-seryl-tRNA(Ser) + AMP + diphosphate + H(+). It carries out the reaction tRNA(Sec) + L-serine + ATP = L-seryl-tRNA(Sec) + AMP + diphosphate + H(+). It functions in the pathway aminoacyl-tRNA biosynthesis; selenocysteinyl-tRNA(Sec) biosynthesis; L-seryl-tRNA(Sec) from L-serine and tRNA(Sec): step 1/1. Catalyzes the attachment of serine to tRNA(Ser). Is also able to aminoacylate tRNA(Sec) with serine, to form the misacylated tRNA L-seryl-tRNA(Sec), which will be further converted into selenocysteinyl-tRNA(Sec). The protein is Serine--tRNA ligase of Bdellovibrio bacteriovorus (strain ATCC 15356 / DSM 50701 / NCIMB 9529 / HD100).